Here is a 718-residue protein sequence, read N- to C-terminus: MESLPARLFPGLSIKIQRSNGLIHSANISTVNVEKSCVSVEWIEGGNTKGKEIDFDDVAAINPELLQLLPLHPKDNLPLQENVTVPKQKRRSVNSKIPAPKEGLRSRSTRMSTVPEVRIATQENEMEVELPVATNSRKQFSVATGLPRPSCPAMTELPLSMVSEEAEEQVHPTRSTSSANPARRKSCIVKEMEKMKNKREEKRAQNSEIRIKRAQEYDSSFPNWEFARMIKEFRVTIECHPLTLTDPTEEHRICVCVRKRPLNKQELAKKEIDVISVPSKCLLFVHEPKLKVDLTKYLENQAFCFDFAFDETASNEVVYRFTARPLVQTIFEGGKATCFAYGQTGSGKTHTMGGDLSGKSQNTSKGIYAMASRDVFLLKSQPRYRNLNLEVYVTFFEIYNGKVFDLLNKKAKLRVLEDSKQQVQVVGLQEYLVNCADDVIKMLNMGSACRTSGQTFANSNSSRSHACFQILLRAKGRLHGKFSLVDLAGNERGADTSSADRQTRMEGAEINKSLLALKECIRALGQNKAHTPFRESKLTQVLRDSFIGENSRTCMIAMISPGISSCEYTLNTLRYADRVKELSPHSGLSGEQPIQMETEEMEASSNGTSLAVNFKEEEELSSQMSSFNEAMSQIRELEERAMEELREIIQQGPGWLELSEMTDQPDYDLETFVNKAESALTQQTKHFSALREVIKALRVAMQLEEQASKQMNSKKRHQ.

A globular region spans residues 1–248 (MESLPARLFP…CHPLTLTDPT (248 aa)). Ser3 and Ser19 each carry phosphoserine. The disordered stretch occupies residues 86–111 (PKQKRRSVNSKIPAPKEGLRSRSTRM). A Phosphoserine; by AURKB modification is found at Ser92. The Microtubule tip localization signal motif lies at 95-98 (SKIP). Phosphoserine is present on residues Ser106, Ser108, Ser112, Ser163, and Ser186. Residues 201 to 232 (EKRAQNSEIRIKRAQEYDSSFPNWEFARMIKE) form a negative regulator of microtubule-binding region. Residues 252 to 582 (RICVCVRKRP…LRYADRVKEL (331 aa)) enclose the Kinesin motor domain. ATP contacts are provided by residues Arg258 and 342-349 (GQTGSGKT). The Nuclear localization signal motif lies at 409–412 (KKAK). 2 positions are modified to phosphoserine: Ser513 and Ser626. Coiled-coil stretches lie at residues 613–651 (NFKE…IIQQ) and 689–716 (ALRE…SKKR).

Belongs to the TRAFAC class myosin-kinesin ATPase superfamily. Kinesin family. MCAK/KIF2 subfamily. As to quaternary structure, interacts with CENPH. Interacts with MTUS2/TIP150; the interaction is direct. Interacts with MAPRE1; the interaction is direct, regulated by phosphorylation and is probably required for targeting to growing microtubule plus ends. Interacts with KIF18B at microtubule tips; this interaction increases the affinity of both partners for microtubule plus ends and is required for robust microtubule depolymerization. Phosphorylation by AURKA or AURKB strongly reduces KIF18B-binding. In terms of processing, phosphorylation by AURKB, regulates association with centromeres and kinetochores and the microtubule depolymerization activity. Ubiquitinated.

The protein localises to the cytoplasm. It localises to the cytoskeleton. The protein resides in the nucleus. Its subcellular location is the chromosome. It is found in the centromere. The protein localises to the kinetochore. In complex with KIF18B, constitutes the major microtubule plus-end depolymerizing activity in mitotic cells. Regulates the turnover of microtubules at the kinetochore and functions in chromosome segregation during mitosis. Plays a role in chromosome congression and is required for the lateral to end-on conversion of the chromosome-microtubule attachment. The polypeptide is Kinesin-like protein KIF2C (KIF2C) (Cricetulus griseus (Chinese hamster)).